A 385-amino-acid chain; its full sequence is Tetraacyldisaccharide 4'-kinase (385 aa).

60 to 67 (TVGGSGKT) is an ATP binding site.

The protein belongs to the LpxK family.

It catalyses the reaction a lipid A disaccharide + ATP = a lipid IVA + ADP + H(+). Its pathway is glycolipid biosynthesis; lipid IV(A) biosynthesis; lipid IV(A) from (3R)-3-hydroxytetradecanoyl-[acyl-carrier-protein] and UDP-N-acetyl-alpha-D-glucosamine: step 6/6. In terms of biological role, transfers the gamma-phosphate of ATP to the 4'-position of a tetraacyldisaccharide 1-phosphate intermediate (termed DS-1-P) to form tetraacyldisaccharide 1,4'-bis-phosphate (lipid IVA). The polypeptide is Tetraacyldisaccharide 4'-kinase (Psychrobacter arcticus (strain DSM 17307 / VKM B-2377 / 273-4)).